The chain runs to 199 residues: Probable molybdenum cofactor guanylyltransferase (199 aa).

Residues 9-11 (LAG), lysine 21, aspartate 69, and aspartate 100 each bind GTP. Position 100 (aspartate 100) interacts with Mg(2+).

It belongs to the MobA family. The cofactor is Mg(2+).

The protein localises to the cytoplasm. The catalysed reaction is Mo-molybdopterin + GTP + H(+) = Mo-molybdopterin guanine dinucleotide + diphosphate. Its function is as follows. Transfers a GMP moiety from GTP to Mo-molybdopterin (Mo-MPT) cofactor (Moco or molybdenum cofactor) to form Mo-molybdopterin guanine dinucleotide (Mo-MGD) cofactor. In Bacillus cytotoxicus (strain DSM 22905 / CIP 110041 / 391-98 / NVH 391-98), this protein is Probable molybdenum cofactor guanylyltransferase.